Here is a 652-residue protein sequence, read N- to C-terminus: Cleavage and polyadenylation specificity factor subunit 6 (652 aa).

The tract at residues 20–85 (QAQDEFGGDG…GVYHQSSGSL (66 aa)) is disordered. One can recognise an RRM domain in the interval 93–173 (YQLYVGNLTW…QAPVVTYPSK (81 aa)). Disordered regions lie at residues 184-440 (KTRP…QQMG) and 518-652 (SYNR…RSRH). The segment covering 187 to 203 (PVPPPQQNGPPRGPAPP) has biased composition (pro residues). A compositionally biased stretch (gly residues) spans 205-223 (MGGGPMPTGHPGGPQGGGP). Pro residues-rich tracts occupy residues 256 to 266 (SGPPRMQPPMH), 295 to 307 (GPRP…PPQR), and 338 to 352 (PQGP…PGPG). The segment covering 391-406 (PGMNMPPQQGMNMTPQ) has biased composition (low complexity). The span at 420-435 (GPWPPPQGKPPGPFPD) shows a compositional bias: pro residues. Positions 518–528 (SYNRRERSRSR) are enriched in basic and acidic residues. Over residues 529–538 (ERSHRSRQRR) the composition is skewed to basic residues. The span at 539–590 (ERSTSRYRERSRERERDRDRERERDGGSYRERSRSRERERQAPDHYRDDSRS) shows a compositional bias: basic and acidic residues. S596 bears the Phosphoserine mark. The span at 598–610 (EPVVAEAAEAPSS) shows a compositional bias: low complexity. Residues 612–652 (RYYEDRERYRSSDRERRDRDRDRDRERERDRDRREEHRSRH) show a composition bias toward basic and acidic residues.

It belongs to the RRM CPSF6/7 family.

Its subcellular location is the nucleus. Its function is as follows. May play a role in pre-mRNA 3'-processing. In Drosophila melanogaster (Fruit fly), this protein is Cleavage and polyadenylation specificity factor subunit 6.